The following is a 363-amino-acid chain: NAD(P)H-quinone oxidoreductase subunit 1, chloroplastic (363 aa).

A run of 8 helical transmembrane segments spans residues 27-47 (LIPI…IVWL), 93-113 (WLFS…YLVV), 124-144 (LGVG…GLLM), 162-182 (AAQA…VALL), 200-220 (ILGW…IASL), 250-270 (FGLF…FVSV), 303-323 (ATLG…LSIL), and 343-363 (FLLP…LALL).

The protein belongs to the complex I subunit 1 family. NDH is composed of at least 16 different subunits, 5 of which are encoded in the nucleus.

The protein resides in the plastid. Its subcellular location is the chloroplast thylakoid membrane. It catalyses the reaction a plastoquinone + NADH + (n+1) H(+)(in) = a plastoquinol + NAD(+) + n H(+)(out). It carries out the reaction a plastoquinone + NADPH + (n+1) H(+)(in) = a plastoquinol + NADP(+) + n H(+)(out). In terms of biological role, NDH shuttles electrons from NAD(P)H:plastoquinone, via FMN and iron-sulfur (Fe-S) centers, to quinones in the photosynthetic chain and possibly in a chloroplast respiratory chain. The immediate electron acceptor for the enzyme in this species is believed to be plastoquinone. Couples the redox reaction to proton translocation, and thus conserves the redox energy in a proton gradient. This is NAD(P)H-quinone oxidoreductase subunit 1, chloroplastic from Chaetosphaeridium globosum (Charophycean green alga).